The sequence spans 1040 residues: Multidrug resistance protein MdtB (1040 aa).

The next 12 membrane-spanning stretches (helical) occupy residues 25–45, 347–367, 369–389, 396–416, 440–460, 472–492, 537–557, 863–883, 888–908, 910–930, 968–988, and 998–1018; these read LLMA…PVAA, LMLA…NIPA, IIPG…MVFL, LTLM…IVVI, IGFT…PLLF, FAVT…TLTP, WLTL…WIVI, LGST…VLGV, FIHP…ALLA, IIAG…LIGI, ILMT…STGV, and IAMV…TPVI.

Belongs to the resistance-nodulation-cell division (RND) (TC 2.A.6) family. MdtB subfamily. In terms of assembly, part of a tripartite efflux system composed of MdtA, MdtB and MdtC. MdtB forms a heteromultimer with MdtC.

The protein resides in the cell inner membrane. The polypeptide is Multidrug resistance protein MdtB (Salmonella paratyphi B (strain ATCC BAA-1250 / SPB7)).